A 338-amino-acid chain; its full sequence is Trace amine-associated receptor 9 (338 aa).

Residues 1 to 23 lie on the Extracellular side of the membrane; that stretch reads MELCYENVNGSCIKSSYSPWPRA. Residue Asn9 is glycosylated (N-linked (GlcNAc...) asparagine). Cystine bridges form between Cys12/Cys176 and Cys95/Cys180. The helical transmembrane segment at 24-48 threads the bilayer; sequence ILYAVLGLGALLAVFGNLLVITAIL. The Cytoplasmic segment spans residues 49 to 58; that stretch reads HFKQLHTPTN. The helical transmembrane segment at 59–80 threads the bilayer; the sequence is FLVASLACADFLVGVTVMPFST. Residues 81-95 are Extracellular-facing; it reads VRSVEGCWYFGDTYC. The helical transmembrane segment at 96 to 118 threads the bilayer; the sequence is KFHTCFDTSFCFASLFHLCCISI. Positions 102 and 103 each coordinate spermidine. The Cytoplasmic segment spans residues 119–138; that stretch reads DRYVAVTDPLTYPTKFTISV. A helical membrane pass occupies residues 139 to 160; sequence SGVCIALSWFFSVTYSFSIFYT. At 161 to 186 the chain is on the extracellular side; that stretch reads GANEEGIEELVVALTCVGGCQAPLNQ. An extracellular Loop 2 (ECL2) region spans residues 164-177; sequence EEGIEELVVALTCV. A helical membrane pass occupies residues 187–208; that stretch reads NWVLLCFLLFFLPTVVMVFLYG. Residues 209–246 lie on the Cytoplasmic side of the membrane; it reads RIFLVAKQQARKIEGSANQPQASSESYKERVARRERKA. Residues 247 to 270 traverse the membrane as a helical segment; it reads AKTLGIAMAAFLVSWLPYIIDAVI. Topologically, residues 271–283 are extracellular; it reads DAYMNFITPAYVY. Residues 284 to 304 form a helical membrane-spanning segment; it reads EILVWCVYYNSAMNPLIYAFF. Residues 305 to 338 lie on the Cytoplasmic side of the membrane; it reads YPWFRKAIKLIVSGKVFRADSSRTNLFSEEAGAG.

It belongs to the G-protein coupled receptor 1 family. In terms of tissue distribution, mainly expressed in neurons of the olfactory epithelium. Also expressed in the intestine.

It localises to the cell membrane. In terms of biological role, olfactory receptor specific for trace amines, such as triethylamine, N-methylpiperidine, N,N-dimethylcyclohexylamine (DMCHA), beta-phenylethylamine (beta-PEA), cadaverine (CAD) and polyamines such as spermidine. Trace amine compounds are enriched in animal body fluids and act on trace amine-associated receptors (TAARs) to elicit both intraspecific and interspecific innate behaviors. Trace amine-binding causes a conformation change that triggers signaling via G(s)-class of G alpha proteins (GNAL or GNAS). In mature olfactory sensory neurons, Taar9 is coupled with GNAL/G(olf)G alpha protein and mediates activation of adenylate cyclase activity to activate cAMP signaling and eventually transmit odorant signals to achieve membrane depolarization. In immature olfactory sensory neurons, Taar9 is coupled with GNAS/G(s) G alpha proteins. The sequence is that of Trace amine-associated receptor 9 from Rattus norvegicus (Rat).